Reading from the N-terminus, the 310-residue chain is AMMECR1-like protein (310 aa).

The interval 26–92 is disordered; the sequence is LSGSGTHSHG…SGALSPLPRP (67 aa). 2 stretches are compositionally biased toward polar residues: residues 28-66 and 74-84; these read GSGT…NVSD and SPITRMNTASG. Serine 74 is modified (phosphoserine). An AMMECR1 domain is found at 97–291; it reads NSTKNLVVTA…ISYAEYIASR (195 aa).

The chain is AMMECR1-like protein (Ammecr1l) from Mus musculus (Mouse).